Consider the following 411-residue polypeptide: Serine hydroxymethyltransferase (411 aa).

Residues Leu-113 and 117 to 119 each bind (6S)-5,6,7,8-tetrahydrofolate; that span reads GHL. Lys-222 is subject to N6-(pyridoxal phosphate)lysine. (6S)-5,6,7,8-tetrahydrofolate contacts are provided by residues Glu-238 and 346 to 348; that span reads SPF.

The protein belongs to the SHMT family. Homodimer. It depends on pyridoxal 5'-phosphate as a cofactor.

It is found in the cytoplasm. The enzyme catalyses (6R)-5,10-methylene-5,6,7,8-tetrahydrofolate + glycine + H2O = (6S)-5,6,7,8-tetrahydrofolate + L-serine. Its pathway is one-carbon metabolism; tetrahydrofolate interconversion. The protein operates within amino-acid biosynthesis; glycine biosynthesis; glycine from L-serine: step 1/1. Catalyzes the reversible interconversion of serine and glycine with tetrahydrofolate (THF) serving as the one-carbon carrier. This reaction serves as the major source of one-carbon groups required for the biosynthesis of purines, thymidylate, methionine, and other important biomolecules. Also exhibits THF-independent aldolase activity toward beta-hydroxyamino acids, producing glycine and aldehydes, via a retro-aldol mechanism. This Prochlorococcus marinus (strain NATL1A) protein is Serine hydroxymethyltransferase.